Reading from the N-terminus, the 142-residue chain is MKVLFSYGTYNNRPYKACGVYESDNRENDGVITDYLSTIPDSYADNGFKVLAAVKDPTITREWIDSQAFEALIEHDQIKVGFYLLDDMEEEDIPDDVDERDTDPRFIPRKEFAYLLEKWLDFYHRPITDMNYQEIIDTKDAY.

This sequence belongs to the UPF0275 family.

This is UPF0275 protein PM0505 from Pasteurella multocida (strain Pm70).